Here is a 318-residue protein sequence, read N- to C-terminus: Olfactory receptor 5M5 (318 aa).

At 1–31 the chain is on the extracellular side; that stretch reads MLAPKKMVRGNYSMVTEFILLGLTDRPELQP. Residue N11 is glycosylated (N-linked (GlcNAc...) asparagine). Residues 32–52 traverse the membrane as a helical segment; sequence LLFVLFLVIYLITVGGNLGMM. Topologically, residues 53–60 are cytoplasmic; sequence VLIRIDSR. A helical transmembrane segment spans residues 61–81; sequence LHTPMYYFLASLSCLDLCYST. At 82–105 the chain is on the extracellular side; it reads NVTPKMLVNFLSEKKTISYAACLV. A disulfide bond links C103 and C195. Residues 106 to 126 form a helical membrane-spanning segment; sequence QCYFFIAMVITEYYMLAVMAY. At 127–139 the chain is on the cytoplasmic side; that stretch reads DRYMAICNPLLYS. A helical transmembrane segment spans residues 140–160; it reads SKMSKGVCVRLIAGPYIYGFL. Residues 161–202 are Extracellular-facing; that stretch reads SGLMETMWTYRLTFCGSNIINHFYCADPPLIRLSCSDTFIKE. Residues 203–223 form a helical membrane-spanning segment; sequence TSMFVVAGFNLSNSLFIILIS. Residues 224–243 are Cytoplasmic-facing; that stretch reads YLFILIAILRMRSAEGRRKA. Residues 244 to 264 form a helical membrane-spanning segment; the sequence is FSTCGSHLVAVTVFYGTLFCM. Residues 265-277 are Extracellular-facing; the sequence is YVRPPTDKSVEQS. A helical membrane pass occupies residues 278-298; sequence KIIAVFYTFVSPMLNPIIYSL. The Cytoplasmic portion of the chain corresponds to 299-318; that stretch reads RNKDVKHAFWKLVRRNVLSK.

It belongs to the G-protein coupled receptor 1 family.

Its subcellular location is the cell membrane. In terms of biological role, potential odorant receptor. The protein is Olfactory receptor 5M5 of Mus musculus (Mouse).